A 234-amino-acid polypeptide reads, in one-letter code: Large ribosomal subunit protein uL1 (234 aa).

It belongs to the universal ribosomal protein uL1 family. As to quaternary structure, part of the 50S ribosomal subunit.

Its function is as follows. Binds directly to 23S rRNA. The L1 stalk is quite mobile in the ribosome, and is involved in E site tRNA release. Protein L1 is also a translational repressor protein, it controls the translation of the L11 operon by binding to its mRNA. This Geobacter metallireducens (strain ATCC 53774 / DSM 7210 / GS-15) protein is Large ribosomal subunit protein uL1.